The chain runs to 366 residues: MAVDLSEEIKQLDATLTGIETVLDVEGLRRRAEDLERQAADPDLWSDQDRAQAVTRRLSSTRGDIARVEGLRRRLDDIAAAADLGDEDLLAEAAADLPRLSSDIAGLEVRTLLSGEYDERDAIVQLSAGAGGVDAADWTAMLLRMYLRWAERHGYATEVFDTSEAEEAGLKSATFQVKAPYAYGTLRSEHGVHRLVRISPFDNQNRRQTSFAGVEVTPVVELSDHVDIDDKDLRIDIFRSSGPGGQGVNTTDSAVRITHLPTGIVVTCQNERSQLQNKAAAMIVLQAKLLERRRAEEAAEKQRITGGPQDVSFGSQIRNYVLHPYQMVKDLRTDTETSNTSGVLDGELDDFIDAEIRWRRSVENQA.

Gln-246 is subject to N5-methylglutamine.

It belongs to the prokaryotic/mitochondrial release factor family. Methylated by PrmC. Methylation increases the termination efficiency of RF2.

The protein localises to the cytoplasm. Peptide chain release factor 2 directs the termination of translation in response to the peptide chain termination codons UGA and UAA. The chain is Peptide chain release factor 2 from Frankia casuarinae (strain DSM 45818 / CECT 9043 / HFP020203 / CcI3).